Consider the following 353-residue polypeptide: Rhodopsin (353 aa).

Residues 1–36 (MNGTEGPYFYIPMVNTTGIVRSPYEYPQYYLVNPAA) are Extracellular-facing. Residues asparagine 2 and asparagine 15 are each glycosylated (N-linked (GlcNAc...) asparagine). The chain crosses the membrane as a helical span at residues 37 to 61 (YAALGAYMFLLILVGFPVNFLTLYV). The Cytoplasmic portion of the chain corresponds to 62-73 (TLEHKKLRTPLN). Residues 74–96 (YILLNLAVADLFMVLGGFTTTMY) form a helical membrane-spanning segment. The Extracellular segment spans residues 97-110 (TSMHGYFVLGRLGC). An intrachain disulfide couples cysteine 110 to cysteine 187. Residues 111–133 (NVEGFFATLGGEIALWSLVVLAI) form a helical membrane-spanning segment. The 'Ionic lock' involved in activated form stabilization motif lies at 134–136 (ERW). Over 134-152 (ERWVVVCKPISNFRFSEDH) the chain is Cytoplasmic. A helical membrane pass occupies residues 153–173 (AIMGLAFTWVMASACAVPPLV). At 174 to 202 (GWSRYIPEGMQCSCGIDYYTRAEGFNNES) the chain is on the extracellular side. A glycan (N-linked (GlcNAc...) asparagine) is linked at asparagine 200. The chain crosses the membrane as a helical span at residues 203 to 224 (FVIYMFVCHFLIPLVVVFFCYG). Residues 225-252 (RLLCAVKEAAAAQQESETTQRAEREVSR) are Cytoplasmic-facing. The chain crosses the membrane as a helical span at residues 253–274 (MVVIMVVAFLVCWCPYAGVAWY). Residues 275 to 286 (IFTHQGSEFGPL) are Extracellular-facing. A helical transmembrane segment spans residues 287-308 (FMTFPAFFAKSSSIYNPMIYIC). Lysine 296 is subject to N6-(retinylidene)lysine. At 309–353 (MNKQFRHCMITTLCCGKNPFEEEEGASTTSKTEASSVSSSSVSPA) the chain is on the cytoplasmic side. 2 S-palmitoyl cysteine lipidation sites follow: cysteine 322 and cysteine 323. Residues 330–353 (EEEGASTTSKTEASSVSSSSVSPA) are disordered. The span at 334–353 (ASTTSKTEASSVSSSSVSPA) shows a compositional bias: low complexity.

Belongs to the G-protein coupled receptor 1 family. Opsin subfamily. Phosphorylated on some or all of the serine and threonine residues present in the C-terminal region. In terms of processing, contains one covalently linked retinal chromophore.

It localises to the membrane. The protein resides in the cell projection. The protein localises to the cilium. Its subcellular location is the photoreceptor outer segment. Functionally, photoreceptor required for image-forming vision at low light intensity. While most salt water fish species use retinal as chromophore, most freshwater fish use 3-dehydroretinal, or a mixture of retinal and 3-dehydroretinal. Light-induced isomerization of 11-cis to all-trans retinal triggers a conformational change that activates signaling via G-proteins. Subsequent receptor phosphorylation mediates displacement of the bound G-protein alpha subunit by arrestin and terminates signaling. This is Rhodopsin (rho) from Chelon labrosus (Thicklip grey mullet).